The primary structure comprises 1455 residues: DNA-directed RNA polymerase subunit beta (1455 aa).

Belongs to the RNA polymerase beta chain family. The RNAP catalytic core consists of 2 alpha, 1 beta, 1 beta' and 1 omega subunit. When a sigma factor is associated with the core the holoenzyme is formed, which can initiate transcription.

It catalyses the reaction RNA(n) + a ribonucleoside 5'-triphosphate = RNA(n+1) + diphosphate. Functionally, DNA-dependent RNA polymerase catalyzes the transcription of DNA into RNA using the four ribonucleoside triphosphates as substrates. The protein is DNA-directed RNA polymerase subunit beta of Rhizorhabdus wittichii (strain DSM 6014 / CCUG 31198 / JCM 15750 / NBRC 105917 / EY 4224 / RW1) (Sphingomonas wittichii).